A 271-amino-acid polypeptide reads, in one-letter code: 2,3,4,5-tetrahydropyridine-2,6-dicarboxylate N-succinyltransferase (271 aa).

Substrate contacts are provided by Arg-102 and Asp-139.

Belongs to the transferase hexapeptide repeat family. Homotrimer.

It localises to the cytoplasm. It carries out the reaction (S)-2,3,4,5-tetrahydrodipicolinate + succinyl-CoA + H2O = (S)-2-succinylamino-6-oxoheptanedioate + CoA. Its pathway is amino-acid biosynthesis; L-lysine biosynthesis via DAP pathway; LL-2,6-diaminopimelate from (S)-tetrahydrodipicolinate (succinylase route): step 1/3. This is 2,3,4,5-tetrahydropyridine-2,6-dicarboxylate N-succinyltransferase from Coxiella burnetii (strain RSA 331 / Henzerling II).